The chain runs to 130 residues: Iron-sulfur cluster insertion protein ErpA 2 (130 aa).

The iron-sulfur cluster site is built by C58, C122, and C124.

It belongs to the HesB/IscA family. Homodimer. The cofactor is iron-sulfur cluster.

In terms of biological role, required for insertion of 4Fe-4S clusters for at least IspG. The sequence is that of Iron-sulfur cluster insertion protein ErpA 2 from Methylococcus capsulatus (strain ATCC 33009 / NCIMB 11132 / Bath).